A 293-amino-acid polypeptide reads, in one-letter code: Ribosomal RNA small subunit methyltransferase H (293 aa).

S-adenosyl-L-methionine-binding positions include 32–34, Asp51, Phe78, Asp99, and Gln106; that span reads GGH. Positions 271–293 are disordered; the sequence is PGTEEIRENPPSRSAKLRVAKRI.

This sequence belongs to the methyltransferase superfamily. RsmH family.

It is found in the cytoplasm. It catalyses the reaction cytidine(1402) in 16S rRNA + S-adenosyl-L-methionine = N(4)-methylcytidine(1402) in 16S rRNA + S-adenosyl-L-homocysteine + H(+). Specifically methylates the N4 position of cytidine in position 1402 (C1402) of 16S rRNA. This chain is Ribosomal RNA small subunit methyltransferase H, found in Persephonella marina (strain DSM 14350 / EX-H1).